Here is a 287-residue protein sequence, read N- to C-terminus: Myoblast determination protein 1 homolog B (287 aa).

The 52-residue stretch at 96 to 147 (DRRRAATMRERRRLSKVNDAFETLKRCTSTNPNQRLPKVDILRNAISYIDSL) folds into the bHLH domain. 2 disordered regions span residues 161–202 (NMEH…FYTD) and 231–277 (QSPS…QLSH). Positions 168 to 188 (DSDASSPSSNCSDGMNSPPCS) are enriched in low complexity. Residues 267–277 (SPGNSCTQLSH) are compositionally biased toward polar residues.

In terms of assembly, efficient DNA binding requires dimerization with another bHLH protein.

It is found in the nucleus. In terms of biological role, may act as a transcriptional activator that promotes transcription of muscle-specific target genes and plays a role in muscle differentiation. This Xenopus laevis (African clawed frog) protein is Myoblast determination protein 1 homolog B (myod1-b).